Here is a 213-residue protein sequence, read N- to C-terminus: Orotate phosphoribosyltransferase (213 aa).

K26 serves as a coordination point for 5-phospho-alpha-D-ribose 1-diphosphate. 34 to 35 (FF) lines the orotate pocket. 5-phospho-alpha-D-ribose 1-diphosphate is bound by residues 72–73 (YK), R99, K100, K103, H105, and 124–132 (DDVITAGTA). Residues T128 and R156 each coordinate orotate.

This sequence belongs to the purine/pyrimidine phosphoribosyltransferase family. PyrE subfamily. Homodimer. The cofactor is Mg(2+).

The catalysed reaction is orotidine 5'-phosphate + diphosphate = orotate + 5-phospho-alpha-D-ribose 1-diphosphate. The protein operates within pyrimidine metabolism; UMP biosynthesis via de novo pathway; UMP from orotate: step 1/2. Its function is as follows. Catalyzes the transfer of a ribosyl phosphate group from 5-phosphoribose 1-diphosphate to orotate, leading to the formation of orotidine monophosphate (OMP). This is Orotate phosphoribosyltransferase from Serratia proteamaculans (strain 568).